Here is a 401-residue protein sequence, read N- to C-terminus: Large ribosomal subunit protein uL3 (401 aa).

The disordered stretch occupies residues 1 to 22 (MSHRKFSAPRHGHMGFTPKKRS).

The protein belongs to the universal ribosomal protein uL3 family.

It localises to the cytoplasm. Functionally, the L3 protein is a component of the large subunit of cytoplasmic ribosomes. The chain is Large ribosomal subunit protein uL3 (rpl-3) from Caenorhabditis elegans.